The primary structure comprises 503 residues: Cytochrome P450 11B1, mitochondrial (503 aa).

The transit peptide at 1–24 (MALRAKAEVCMAVPWLSLQRAQAL) directs the protein to the mitochondrion. C450 is a binding site for heme.

The protein belongs to the cytochrome P450 family. Heme is required as a cofactor. Expressed in the zona fasciculata/reticularis of the adrenal cortex.

The protein resides in the mitochondrion inner membrane. The catalysed reaction is a steroid + 2 reduced [adrenodoxin] + O2 + 2 H(+) = an 11beta-hydroxysteroid + 2 oxidized [adrenodoxin] + H2O. It catalyses the reaction 11-deoxycortisol + 2 reduced [adrenodoxin] + O2 + 2 H(+) = cortisol + 2 oxidized [adrenodoxin] + H2O. The enzyme catalyses 21-hydroxyprogesterone + 2 reduced [adrenodoxin] + O2 + 2 H(+) = corticosterone + 2 oxidized [adrenodoxin] + H2O. Its pathway is steroid biosynthesis; glucocorticoid biosynthesis. The protein operates within steroid hormone biosynthesis. In terms of biological role, a cytochrome P450 monooxygenase involved in the biosynthesis of adrenal corticoids. Catalyzes a variety of reactions that are essential for many species, including detoxification, defense, and the formation of endogenous chemicals like steroid hormones. Steroid 11beta, 18- and 19-hydroxylase with preferred regioselectivity at 11beta, then 18, and lastly 19. Catalyzes the hydroxylation of 11-deoxycortisol and 11-deoxycorticosterone (21-hydroxyprogesterone) at 11beta position, yielding cortisol or corticosterone, respectively, but cannot produce aldosterone. Mechanistically, uses molecular oxygen inserting one oxygen atom into a substrate for hydroxylation and reducing the second into a water molecule. Two electrons are provided by NADPH via a two-protein mitochondrial transfer system comprising flavoprotein FDXR (adrenodoxin/ferredoxin reductase) and nonheme iron-sulfur protein FDX1 or FDX2 (adrenodoxin/ferredoxin). Due to its lack of 18-oxidation activity, it is incapable of generating aldosterone. Could also be involved in the androgen metabolic pathway. This chain is Cytochrome P450 11B1, mitochondrial, found in Homo sapiens (Human).